The following is a 961-amino-acid chain: Outer capsid protein VP2 (961 aa).

It belongs to the orbivirus VP2 family.

The protein resides in the virion. In terms of biological role, the VP2 protein is one of the two proteins (with VP5) which constitute the virus particle outer capsid. It is the major target of the host immunogenic response. Responsible for viral attachment to target host cell, probably by binding to sialic acid. This attachment induces virion internalization predominantly through clathrin-dependent endocytosis. The chain is Outer capsid protein VP2 (Segment-2) from Bluetongue virus 1 (isolate South Africa vaccine) (BTV 1).